The sequence spans 31 residues: Photosystem II reaction center protein T (31 aa).

The helical transmembrane segment at serine 3–phenylalanine 23 threads the bilayer.

This sequence belongs to the PsbT family. PSII is composed of 1 copy each of membrane proteins PsbA, PsbB, PsbC, PsbD, PsbE, PsbF, PsbH, PsbI, PsbJ, PsbK, PsbL, PsbM, PsbT, PsbX, PsbY, PsbZ, Psb30/Ycf12, peripheral proteins PsbO, CyanoQ (PsbQ), PsbU, PsbV and a large number of cofactors. It forms dimeric complexes.

The protein localises to the cellular thylakoid membrane. Found at the monomer-monomer interface of the photosystem II (PS II) dimer, plays a role in assembly and dimerization of PSII. PSII is a light-driven water plastoquinone oxidoreductase, using light energy to abstract electrons from H(2)O, generating a proton gradient subsequently used for ATP formation. This chain is Photosystem II reaction center protein T, found in Synechococcus elongatus (strain ATCC 33912 / PCC 7942 / FACHB-805) (Anacystis nidulans R2).